A 1130-amino-acid polypeptide reads, in one-letter code: DNA-directed RNA polymerase I subunit rpa2 (1130 aa).

The segment at 1070-1096 (CKLCGSTLTIYSKKDYSNQTVSECKSC) adopts a C4-type zinc-finger fold.

The protein belongs to the RNA polymerase beta chain family. As to quaternary structure, component of the RNA polymerase I (Pol I) complex consisting of 14 subunits.

It is found in the nucleus. It localises to the nucleolus. It carries out the reaction RNA(n) + a ribonucleoside 5'-triphosphate = RNA(n+1) + diphosphate. In terms of biological role, DNA-dependent RNA polymerase catalyzes the transcription of DNA into RNA using the four ribonucleoside triphosphates as substrates. Second largest core component of RNA polymerase I which synthesizes ribosomal RNA precursors. Proposed to contribute to the polymerase catalytic activity and forms the polymerase active center together with the largest subunit. Pol I is composed of mobile elements and RPA2 is part of the core element with the central large cleft and probably a clamp element that moves to open and close the cleft. In Dictyostelium discoideum (Social amoeba), this protein is DNA-directed RNA polymerase I subunit rpa2 (polr1b).